The sequence spans 229 residues: MSVRPVVITIDGPSGSGKGTVAGLLAKRLGWNLLDSGALYRLLAFAARNHGVDLTNEEALKVLAAHLDVQFVTSTDLHPQQIILEGEDVTDAIRNEQVGAGASQVASLPAVREALLQRQHAFLEPPGLVADGRDMGTVVFPDAPLKVFLTARAEERARRRYQQLKESGVDANLSSLLGEISKRDERDSQRAVAPLKAAPDAIQLDSTELTIEQVVERIMSEIAARDLAG.

12–20 contacts ATP; the sequence is GPSGSGKGT.

This sequence belongs to the cytidylate kinase family. Type 1 subfamily.

It localises to the cytoplasm. It catalyses the reaction CMP + ATP = CDP + ADP. It carries out the reaction dCMP + ATP = dCDP + ADP. This Azotobacter vinelandii (strain DJ / ATCC BAA-1303) protein is Cytidylate kinase.